The following is a 188-amino-acid chain: dCTP deaminase (188 aa).

Residues 111-116, 135-137, Gln156, Tyr170, and Gln180 each bind dCTP; these read KSTYAR and TLE. The active-site Proton donor/acceptor is Glu137.

It belongs to the dCTP deaminase family. In terms of assembly, homotrimer.

The enzyme catalyses dCTP + H2O + H(+) = dUTP + NH4(+). It participates in pyrimidine metabolism; dUMP biosynthesis; dUMP from dCTP (dUTP route): step 1/2. Its function is as follows. Catalyzes the deamination of dCTP to dUTP. This is dCTP deaminase from Pseudomonas fluorescens (strain SBW25).